We begin with the raw amino-acid sequence, 307 residues long: Protoheme IX farnesyltransferase (307 aa).

Helical transmembrane passes span M32–F52, F65–I85, P108–L128, P131–W151, L158–I178, I186–A206, L251–F271, and F287–F307.

It belongs to the UbiA prenyltransferase family. Protoheme IX farnesyltransferase subfamily. As to quaternary structure, interacts with CtaA.

Its subcellular location is the cell membrane. The enzyme catalyses heme b + (2E,6E)-farnesyl diphosphate + H2O = Fe(II)-heme o + diphosphate. It functions in the pathway porphyrin-containing compound metabolism; heme O biosynthesis; heme O from protoheme: step 1/1. Functionally, converts heme B (protoheme IX) to heme O by substitution of the vinyl group on carbon 2 of heme B porphyrin ring with a hydroxyethyl farnesyl side group. This Bacillus anthracis (strain A0248) protein is Protoheme IX farnesyltransferase.